Reading from the N-terminus, the 1390-residue chain is DNA-directed RNA polymerase subunit beta'' (1390 aa).

Cys220, Cys291, Cys298, and Cys301 together coordinate Zn(2+).

It belongs to the RNA polymerase beta' chain family. RpoC2 subfamily. In plastids the minimal PEP RNA polymerase catalytic core is composed of four subunits: alpha, beta, beta', and beta''. When a (nuclear-encoded) sigma factor is associated with the core the holoenzyme is formed, which can initiate transcription. Zn(2+) serves as cofactor.

The protein localises to the plastid. The protein resides in the chloroplast. It carries out the reaction RNA(n) + a ribonucleoside 5'-triphosphate = RNA(n+1) + diphosphate. DNA-dependent RNA polymerase catalyzes the transcription of DNA into RNA using the four ribonucleoside triphosphates as substrates. In Populus alba (White poplar), this protein is DNA-directed RNA polymerase subunit beta''.